A 413-amino-acid chain; its full sequence is DNA primase large subunit PriL (413 aa).

[4Fe-4S] cluster is bound by residues cysteine 230, cysteine 301, cysteine 310, and cysteine 317. 3 stretches are compositionally biased toward basic and acidic residues: residues 340–356 (MEKEKEEKEEKEKQEEK), 362–381 (KEKQEEIKKKKKKEKQEEKG), and 388–413 (KKRERKQEKETKRREGKEKQEEKKRI). A disordered region spans residues 340–413 (MEKEKEEKEE…KEKQEEKKRI (74 aa)).

This sequence belongs to the eukaryotic-type primase large subunit family. As to quaternary structure, heterodimer of a small subunit (PriS) and a large subunit (PriL). It depends on [4Fe-4S] cluster as a cofactor.

In terms of biological role, regulatory subunit of DNA primase, an RNA polymerase that catalyzes the synthesis of short RNA molecules used as primers for DNA polymerase during DNA replication. Stabilizes and modulates the activity of the small subunit, increasing the rate of DNA synthesis, and conferring RNA synthesis capability. The DNA polymerase activity may enable DNA primase to also catalyze primer extension after primer synthesis. May also play a role in DNA repair. In Methanosarcina barkeri (strain Fusaro / DSM 804), this protein is DNA primase large subunit PriL.